Here is a 75-residue protein sequence, read N- to C-terminus: Caerin 1.11 (75 aa).

Residues 1 to 22 (MASLKKSLFLVLFLGFVSVSIC) form the signal peptide. Residues 23–49 (EEEKRQEDEDEHEEEGENQEEGSEEKR) constitute a propeptide that is removed on maturation. The interval 24–48 (EEKRQEDEDEHEEEGENQEEGSEEK) is disordered. The segment covering 30-45 (DEDEHEEEGENQEEGS) has biased composition (acidic residues). Position 74 is a leucine amide (leucine 74).

This sequence belongs to the frog skin active peptide (FSAP) family. Caerin subfamily. Expressed by the skin glands.

The protein localises to the secreted. The protein resides in the target cell membrane. Functionally, cationic amphipathic alpha-helical antimicrobial peptide with weak or no activity against both Gram-positive and Gram-negative bacteria. Is weakly active against E.coli (MIC=25 uM), E.cloacae (MIC=50 uM), K.pneumoniae (MIC=25 uM), and S.haemolyticus (MIC=50 uM). Has no activity against S.typhimurium, S.enteritidis, B.megaterium, and S.aureus (MIC&gt;100 uM). This chain is Caerin 1.11, found in Ranoidea caerulea (Green tree frog).